Consider the following 58-residue polypeptide: Ikitoxin (58 aa).

Residues 3–58 enclose the LCN-type CS-alpha/beta domain; the sequence is VPGNYPLDKDGNTYKCFLLGENEECLNVCKLHGVQYGYCYASKCWCEYLEDDKDSV. Cystine bridges form between cysteine 18–cysteine 41, cysteine 27–cysteine 46, and cysteine 31–cysteine 48.

In terms of tissue distribution, expressed by the venom gland.

The protein localises to the secreted. Beta toxins bind voltage-independently at site-4 of sodium channels (Nav) and shift the voltage of activation toward more negative potentials thereby affecting sodium channel activation and promoting spontaneous and repetitive firing. Does not produce effect when administered to blowfly and cabbage looper larvae. In mice, does not produce convulsions, tremors, increased ventilation nor death. The chain is Ikitoxin from Parabuthus transvaalicus (Transvaal thick-tailed scorpion).